Here is a 180-residue protein sequence, read N- to C-terminus: Small ribosomal subunit protein bS16 (180 aa).

It belongs to the bacterial ribosomal protein bS16 family.

This chain is Small ribosomal subunit protein bS16, found in Flavobacterium psychrophilum (strain ATCC 49511 / DSM 21280 / CIP 103535 / JIP02/86).